A 741-amino-acid chain; its full sequence is MEANFVSSALAGVQNNRSVKRSLDRLKSLFSSGQHQLNGSLGKKVFILLALGGGAFSLVKFYKAKNEGSSKQSGLIIDLKDKNSKKDKKRNVTRVDAVFFRRLAKIIRIVIPSLKSKEFLSLLYLTALLFARTMLSVSIAEIAGKNAQNLVARKWKEMRNGVLKFALVSIPASFVNASLKYETDMLALRFRKRLSEYVHKEYLEGVNFYKASHLGGADRIDNADQRVTSDIEQFCNSMSSLYTTLFKPFLDLVLFTRKLVVVMGWGSPLLMFSYFIVSGFLKKLIMPPFGRLTAKQSELEGNYRTVHQRLITNAEEIAFYDGSRKERQIINLSFGDIYNHTGYVSYLKCLVGIFDGFLVKYCASIVGYGCMVLPIYTGIRGSSGKDSTELTKDYIRNTQLMVALSQAIGQLVLLGNKVTLMAGYTSRVSELLEMIKSIKERGTSQFTIVHEDDVPNPLTNSPVNDKYDTSVDMSSWLEDWRKRSDQTRIVKRQQSNRSSASGATTVYGGGTFVEGDFIKFENVSIVSPEGKLLVENLDFQVMPNQNVMITGPNGSGKSSLFRILGELWPLHCGTVIKPRKEDILFVPQKPYLVLGTLRDQIIYPHSHDDMKKLGVTDDDLQHLLATVDPNLTIIRQWNWDDTKDWFTALSGGQKQRIAMARLFYHRPQYAILDECTSAVSDEVEGKIYETCKKLGITLFTVSHRPQLRAYHDYVLLFNGRGGWEWSKIDHDDDHLKKPLSH.

Helical transmembrane passes span 39-59 (GSLG…FSLV), 119-139 (FLSL…SVSI), and 260-280 (VVVM…VSGF). In terms of domain architecture, ABC transmembrane type-1 spans 131–409 (ARTMLSVSIA…LMVALSQAIG (279 aa)). Residues 518–740 (IKFENVSIVS…DDDHLKKPLS (223 aa)) enclose the ABC transporter domain. 551 to 558 (GPNGSGKS) serves as a coordination point for ATP.

This sequence belongs to the ABC transporter superfamily. ABCD family. Peroxisomal fatty acyl CoA transporter (TC 3.A.1.203) subfamily.

It localises to the membrane. This chain is ABC transporter D family member 2 (abcD2), found in Dictyostelium discoideum (Social amoeba).